Consider the following 133-residue polypeptide: Small ribosomal subunit protein uS8 (133 aa).

Belongs to the universal ribosomal protein uS8 family. Part of the 30S ribosomal subunit. Contacts proteins S5 and S12.

Functionally, one of the primary rRNA binding proteins, it binds directly to 16S rRNA central domain where it helps coordinate assembly of the platform of the 30S subunit. The sequence is that of Small ribosomal subunit protein uS8 from Thermosynechococcus vestitus (strain NIES-2133 / IAM M-273 / BP-1).